A 447-amino-acid chain; its full sequence is GTPase Der (447 aa).

EngA-type G domains are found at residues 3-167 (PVIA…VQER) and 181-354 (VKIA…AAAM). GTP contacts are provided by residues 9 to 16 (GRPNVGKS), 56 to 60 (DTGGF), 119 to 122 (NKAE), 187 to 194 (GRPNVGKS), 234 to 238 (DTAGL), and 299 to 302 (NKWD). The KH-like domain maps to 355–439 (VKLPTPQLTR…PLRIEFRTNK (85 aa)).

Belongs to the TRAFAC class TrmE-Era-EngA-EngB-Septin-like GTPase superfamily. EngA (Der) GTPase family. In terms of assembly, associates with the 50S ribosomal subunit.

Functionally, GTPase that plays an essential role in the late steps of ribosome biogenesis. This chain is GTPase Der, found in Cupriavidus taiwanensis (strain DSM 17343 / BCRC 17206 / CCUG 44338 / CIP 107171 / LMG 19424 / R1) (Ralstonia taiwanensis (strain LMG 19424)).